The sequence spans 215 residues: Adenylate kinase (215 aa).

Gly10 to Thr15 contacts ATP. The segment at Ser30 to Val59 is NMP. AMP contacts are provided by residues Thr31, Arg36, Lys57–Val59, Gly85–Arg88, and Gln92. Residues Gly122–Asp159 form an LID region. ATP contacts are provided by residues Arg123 and Thr132 to Tyr133. Residues Arg156 and Arg167 each coordinate AMP. Residue Gln201 participates in ATP binding.

It belongs to the adenylate kinase family. As to quaternary structure, monomer.

The protein localises to the cytoplasm. The catalysed reaction is AMP + ATP = 2 ADP. It participates in purine metabolism; AMP biosynthesis via salvage pathway; AMP from ADP: step 1/1. Its function is as follows. Catalyzes the reversible transfer of the terminal phosphate group between ATP and AMP. Plays an important role in cellular energy homeostasis and in adenine nucleotide metabolism. This chain is Adenylate kinase, found in Hydrogenovibrio crunogenus (strain DSM 25203 / XCL-2) (Thiomicrospira crunogena).